The sequence spans 578 residues: MAAAMPLALLVLLLLGPGGWCLAEPPRDSLREELVITPLPSGDVAATFQFRTRWDSELQREGVSHYRLFPKALGQLISKYSLRELHLSFTQGFWRTRYWGPPFLQAPSGAELWVWFQDTVTDVDKSWKELSNVLSGIFCASLNFIDSTNTVTPTASFKPLGLANDTDHYFLRYAVLPREVVCTENLTPWKKLLPCSSKAGLSVLLKADRLFHTSYHSQAVHIRPVCRNARCTSISWELRQTLSVVFDAFITGQGKKDWSLFRMFSRTLTEPCPLASESRVYVDITTYNQDNETLEVHPPPTTTYQDVILGTRKTYAIYDLLDTAMINNSRNLNIQLKWKRPPENEAPPVPFLHAQRYVSGYGLQKGELSTLLYNTHPYRAFPVLLLDTVPWYLRLYVHTLTITSKGKENKPSYIHYQPAQDRLQPHLLEMLIQLPANSVTKVSIQFERALLKWTEYTPDPNHGFYVSPSVLSALVPSMVAAKPVDWEESPLFNSLFPVSDGSNYFVRLYTEPLLVNLPTPDFSMPYNVICLTCTVVAVCYGSFYNLLTRTFHIEEPRTGGLAKRLANLIRRARGVPPL.

A signal peptide spans 1-21 (MAAAMPLALLVLLLLGPGGWC). The Lumenal portion of the chain corresponds to 22–525 (LAEPPRDSLR…NLPTPDFSMP (504 aa)). The N-linked (GlcNAc...) asparagine glycan is linked to Asn-164. Disulfide bonds link Cys-195-Cys-272 and Cys-226-Cys-231. 2 N-linked (GlcNAc...) asparagine glycosylation sites follow: Asn-291 and Asn-327. A 2-acyl-6-[6-phosphoethanolamine-alpha-D-mannosyl-(1-&gt;2)-6-phosphoethanolamine-alpha-D-mannosyl-(1-&gt;6)-2-phosphoethanolamine-alpha-D-mannosyl-(1-&gt;4)-alpha-D-glucosaminyl]-1-(1-radyl,2-acyl-sn-glycero-3-phospho)-1D-myo-inositol is bound by residues Asn-461, Asp-521, Ser-523, and Asn-527. Residues 526 to 548 (YNVICLTCTVVAVCYGSFYNLLT) traverse the membrane as a helical segment. At 549–578 (RTFHIEEPRTGGLAKRLANLIRRARGVPPL) the chain is on the cytoplasmic side.

The protein belongs to the PIGT family. In terms of assembly, heteropentamer. Part of the GPI-anchor transamidase complex, consisting of PIGK, PIGT, PIGS, PIGU and GAA1. The disulfide bond between PIGK/GPI8 and PIGT is important for normal enzyme activity.

It localises to the endoplasmic reticulum membrane. It participates in glycolipid biosynthesis; glycosylphosphatidylinositol-anchor biosynthesis. In terms of biological role, component of the glycosylphosphatidylinositol-anchor (GPI-anchor) transamidase (GPI-T) complex that catalyzes the formation of the linkage between a proprotein and a GPI-anchor and participates in GPI anchored protein biosynthesis. May play a crucial role in GPI-T complex assembly in the luminal layer. Binds GPI-anchor. In Homo sapiens (Human), this protein is GPI-anchor transamidase component PIGT.